The sequence spans 307 residues: Elongation factor Ts (307 aa).

The involved in Mg(2+) ion dislocation from EF-Tu stretch occupies residues 80 to 83; that stretch reads TDFV.

The protein belongs to the EF-Ts family.

It localises to the cytoplasm. In terms of biological role, associates with the EF-Tu.GDP complex and induces the exchange of GDP to GTP. It remains bound to the aminoacyl-tRNA.EF-Tu.GTP complex up to the GTP hydrolysis stage on the ribosome. In Rhodospirillum centenum (strain ATCC 51521 / SW), this protein is Elongation factor Ts.